The following is a 510-amino-acid chain: NAD(P)H-quinone oxidoreductase subunit 2, chloroplastic (510 aa).

The next 12 membrane-spanning stretches (helical) occupy residues 24 to 44 (LLLF…GLIL), 59 to 79 (WFYF…LFRW), 99 to 119 (IFQF…VEYI), 124 to 144 (MAIT…MFLC), 149 to 169 (LITI…LSGY), 183 to 203 (YLLM…WLYG), 229 to 249 (ISIA…PAPF), 295 to 315 (WHLL…LIAI), 323 to 343 (MLAY…IVGD), 354 to 374 (YMLF…LFGL), 395 to 415 (ALSS…AGFF), and 418 to 438 (LHLF…IGLL).

It belongs to the complex I subunit 2 family. In terms of assembly, NDH is composed of at least 16 different subunits, 5 of which are encoded in the nucleus.

Its subcellular location is the plastid. The protein localises to the chloroplast thylakoid membrane. It carries out the reaction a plastoquinone + NADH + (n+1) H(+)(in) = a plastoquinol + NAD(+) + n H(+)(out). The enzyme catalyses a plastoquinone + NADPH + (n+1) H(+)(in) = a plastoquinol + NADP(+) + n H(+)(out). Its function is as follows. NDH shuttles electrons from NAD(P)H:plastoquinone, via FMN and iron-sulfur (Fe-S) centers, to quinones in the photosynthetic chain and possibly in a chloroplast respiratory chain. The immediate electron acceptor for the enzyme in this species is believed to be plastoquinone. Couples the redox reaction to proton translocation, and thus conserves the redox energy in a proton gradient. This is NAD(P)H-quinone oxidoreductase subunit 2, chloroplastic from Ensete ventricosum (Abyssinian banana).